A 500-amino-acid chain; its full sequence is Histidine--tRNA ligase (500 aa).

Belongs to the class-II aminoacyl-tRNA synthetase family. In terms of assembly, homodimer.

It localises to the cytoplasm. It catalyses the reaction tRNA(His) + L-histidine + ATP = L-histidyl-tRNA(His) + AMP + diphosphate + H(+). The polypeptide is Histidine--tRNA ligase (hisS) (Mesorhizobium japonicum (strain LMG 29417 / CECT 9101 / MAFF 303099) (Mesorhizobium loti (strain MAFF 303099))).